A 161-amino-acid chain; its full sequence is Lipoprotein LpqH (161 aa).

The N-terminal stretch at 1–21 is a signal peptide; that stretch reads MNRQLRFAVAGPEILAAVVSG. A compositionally biased stretch (low complexity) spans 21–46; it reads GCSSGNKSAPSSSASSSSTSPSASSG. Residues 21 to 49 are disordered; the sequence is GCSSGNKSAPSSSASSSSTSPSASSGGAA. C22 carries N-palmitoyl cysteine lipidation. C22 is lipidated: S-diacylglycerol cysteine.

It belongs to the mycobacterial 19 kDa antigen family. In terms of processing, modified by Lgt on Cys-22 with an S-linked diacylglycerol with a mixture of C16, C18 and C19 fatty acids, signal peptide is removed by LspA, modifed by Lnt with an amide-linked mixture of C16 and C19 fatty acids.

The protein resides in the cell membrane. In terms of biological role, might be involved in ligand transport. A host TLR2 agonist, modifies host gene expression in response to pathogen. This is Lipoprotein LpqH (lpqH) from Mycobacterium avium.